The chain runs to 259 residues: Protein N-terminal and lysine N-methyltransferase efm7 (259 aa).

Residues W56, 83 to 85 (GAA), D105, W139, and A163 each bind S-adenosyl-L-methionine.

It belongs to the class I-like SAM-binding methyltransferase superfamily. EFM7 family.

It is found in the cytoplasm. In terms of biological role, S-adenosyl-L-methionine-dependent protein methyltransferase that trimethylates the N-terminal glycine 'Gly-2' of elongation factor 1-alpha, before also catalyzing the mono- and dimethylation of 'Lys-3'. The protein is Protein N-terminal and lysine N-methyltransferase efm7 of Aspergillus fumigatus (strain ATCC MYA-4609 / CBS 101355 / FGSC A1100 / Af293) (Neosartorya fumigata).